The sequence spans 496 residues: Hexokinase-2 (496 aa).

The helical transmembrane segment at 4–24 (ATVGAVVVGTAAAVAVAALIM) threads the bilayer. Residues 35–487 (ARARAILKEF…SGIGAALLAA (453 aa)) enclose the Hexokinase domain. The tract at residues 90–228 (TGDEGGVFYA…EIDMRVSALV (139 aa)) is hexokinase small subdomain. The ADP site is built by G104, T105, and N106. T194, K195, N229, and D230 together coordinate D-glucose. A hexokinase large subdomain region spans residues 229–476 (NDTVGTLAGG…TSIVFKHAND (248 aa)). Residue T253 coordinates ADP. D-glucose-binding residues include N256, E284, and E315. G441 is an ADP binding site.

Belongs to the hexokinase family.

The protein localises to the plastid. Its subcellular location is the chloroplast outer membrane. It catalyses the reaction a D-hexose + ATP = a D-hexose 6-phosphate + ADP + H(+). The catalysed reaction is D-fructose + ATP = D-fructose 6-phosphate + ADP + H(+). It carries out the reaction D-glucose + ATP = D-glucose 6-phosphate + ADP + H(+). It functions in the pathway carbohydrate metabolism; hexose metabolism. It participates in carbohydrate degradation; glycolysis; D-glyceraldehyde 3-phosphate and glycerone phosphate from D-glucose: step 1/4. Fructose and glucose phosphorylating enzyme. May be involved in the phosphorylation of glucose during the export from plastids to cytosol. Seems neither to be involved in cell sugar sensing nor in carbohydrate metabolism in tuber. The chain is Hexokinase-2 (HXK2) from Solanum tuberosum (Potato).